The primary structure comprises 1296 residues: Protein broad-minded (1296 aa).

In terms of domain architecture, Rab-GAP TBC spans 1158–1281; sequence GIHPIYFCSA…YMENLEQNYR (124 aa).

In terms of assembly, interacts with CDK20, which promotes CDK20 stability and function. Interacts with FAM149B1; may play a role in cilium assembly.

The protein localises to the cytoplasm. Its subcellular location is the cell projection. The protein resides in the cilium. In terms of biological role, required for high-level Shh responses in the developing neural tube. Together with CDK20, controls the structure of the primary cilium by coordinating assembly of the ciliary membrane and axoneme, allowing GLI2 to be properly activated in response to Shh signaling. The polypeptide is Protein broad-minded (Tbc1d32) (Mus musculus (Mouse)).